We begin with the raw amino-acid sequence, 82 residues long: Penaeidin-3b (82 aa).

Positions 1–19 (MRLVVCLVFLASFALVCQG) are cleaved as a signal peptide. A Pyrrolidone carboxylic acid modification is found at glutamine 20. Cystine bridges form between cysteine 51–cysteine 66, cysteine 55–cysteine 73, and cysteine 67–cysteine 74. A Serine amide modification is found at serine 81.

The protein belongs to the penaeidin family. As to expression, higher expression in hemocytes and to a lesser extent in heart, testis, gills, intestine, lymphoid organ and hepatopancreas. Traces in eyes and subcuticular epithelium. Not present in the brain.

The protein localises to the cytoplasmic granule. Its function is as follows. Antibacterial activity against M.luteus and E.coli bacteria. Antifungal activity against N.crassa and F.oxysporum. Presents chitin-binding activity. This Penaeus vannamei (Whiteleg shrimp) protein is Penaeidin-3b.